The primary structure comprises 187 residues: Probable RNA 2'-phosphotransferase (187 aa).

It belongs to the KptA/TPT1 family.

Its function is as follows. Removes the 2'-phosphate from RNA via an intermediate in which the phosphate is ADP-ribosylated by NAD followed by a presumed transesterification to release the RNA and generate ADP-ribose 1''-2''-cyclic phosphate (APPR&gt;P). May function as an ADP-ribosylase. This Pseudomonas syringae pv. tomato (strain ATCC BAA-871 / DC3000) protein is Probable RNA 2'-phosphotransferase.